Consider the following 298-residue polypeptide: Formamidopyrimidine-DNA glycosylase (298 aa).

The Schiff-base intermediate with DNA role is filled by Pro2. The active-site Proton donor is Glu3. Lys58 (proton donor; for beta-elimination activity) is an active-site residue. Residues His106, Arg128, and Lys171 each coordinate DNA. The FPG-type zinc finger occupies 262-298 (SVYDQEGQPCRTPGCGGTVERVVQAGRSTFYCAACQK). Arg288 serves as the catalytic Proton donor; for delta-elimination activity.

It belongs to the FPG family. In terms of assembly, monomer. The cofactor is Zn(2+).

The catalysed reaction is Hydrolysis of DNA containing ring-opened 7-methylguanine residues, releasing 2,6-diamino-4-hydroxy-5-(N-methyl)formamidopyrimidine.. It carries out the reaction 2'-deoxyribonucleotide-(2'-deoxyribose 5'-phosphate)-2'-deoxyribonucleotide-DNA = a 3'-end 2'-deoxyribonucleotide-(2,3-dehydro-2,3-deoxyribose 5'-phosphate)-DNA + a 5'-end 5'-phospho-2'-deoxyribonucleoside-DNA + H(+). In terms of biological role, involved in base excision repair of DNA damaged by oxidation or by mutagenic agents. Acts as a DNA glycosylase that recognizes and removes damaged bases. Has a preference for oxidized purines, such as 7,8-dihydro-8-oxoguanine (8-oxoG). Has AP (apurinic/apyrimidinic) lyase activity and introduces nicks in the DNA strand. Cleaves the DNA backbone by beta-delta elimination to generate a single-strand break at the site of the removed base with both 3'- and 5'-phosphates. This chain is Formamidopyrimidine-DNA glycosylase (mutM), found in Agrobacterium fabrum (strain C58 / ATCC 33970) (Agrobacterium tumefaciens (strain C58)).